The sequence spans 1876 residues: Phenolphthiocerol/phthiocerol polyketide synthase subunit A (1876 aa).

Thr2 is modified (N-acetylthreonine). A Carrier 1 domain is found at 9-83 (ADLRHWLIDY…ALAAYLAAPE (75 aa)). Ser43 bears the O-(pantetheine 4'-phosphoryl)serine mark. Positions 101–526 (DEPIAVVGMG…GTNAHVVIEQ (426 aa)) constitute a Ketosynthase family 3 (KS3) domain. Catalysis depends on for beta-ketoacyl synthase activity residues Cys273, His408, and His448. Residues 626-950 (SPGPGTVFVY…NLNKAHTIHP (325 aa)) are acyltransferase. Ser720 functions as the For malonyltransferase activity in the catalytic mechanism. Residues 997–1112 (HTTVATVSAS…AQLSSSPSDS (116 aa)) form an N-terminal hotdog fold region. Residues 997–1267 (HTTVATVSAS…YRALDFGLDV (271 aa)) form the PKS/mFAS DH domain. The active-site Proton acceptor; for dehydratase activity is His1027. The disordered stretch occupies residues 1102-1130 (TAQLSSSPSDSASSLNEHHRANGQPPERA). A compositionally biased stretch (low complexity) spans 1106–1115 (SSSPSDSASS). The tract at residues 1130 to 1267 (AHRDLIPDLA…YRALDFGLDV (138 aa)) is C-terminal hotdog fold. Catalysis depends on Asp1186, which acts as the Proton donor; for dehydratase activity. 1491–1551 (AAYLITGGLG…RRRIDAIRAL (61 aa)) is an NADP(+) binding site. A beta-ketoacyl reductase region spans residues 1491 to 1728 (AAYLITGGLG…DGYDVAQAVV (238 aa)). Positions 1759–1836 (EVRSELEQGL…SLASYLAKRV (78 aa)) constitute a Carrier 2 domain. The residue at position 1796 (Ser1796) is an O-(pantetheine 4'-phosphoryl)serine.

The cofactor is NADP(+). Pantetheine 4'-phosphate is required as a cofactor.

It carries out the reaction icosanoyl-[(phenol)carboxyphthiodiolenone synthase] + 2 (S)-methylmalonyl-CoA + 3 malonyl-CoA + 5 NADPH + 10 H(+) = C32-carboxyphthiodiolenone-[(phenol)carboxyphthiodiolenone synthase] + 5 CO2 + 5 NADP(+) + 5 CoA + 2 H2O. The catalysed reaction is docosanoyl-[(phenol)carboxyphthiodiolenone synthase] + 2 (S)-methylmalonyl-CoA + 3 malonyl-CoA + 5 NADPH + 10 H(+) = C34-carboxyphthiodiolenone-[(phenol)carboxyphthiodiolenone synthase] + 5 CO2 + 5 NADP(+) + 5 CoA + 2 H2O. It catalyses the reaction 17-(4-hydroxyphenyl)heptadecanoyl-[(phenol)carboxyphthiodiolenone synthase] + 2 (S)-methylmalonyl-CoA + 3 malonyl-CoA + 5 NADPH + 10 H(+) = C35-(phenol)carboxyphthiodiolenone-[(phenol)carboxyphthiodiolenone synthase] + 5 CO2 + 5 NADP(+) + 5 CoA + 2 H2O. The enzyme catalyses 19-(4-hydroxyphenyl)nonadecanoyl-[(phenol)carboxyphthiodiolenone synthase] + 2 (S)-methylmalonyl-CoA + 3 malonyl-CoA + 5 NADPH + 10 H(+) = C37-(phenol)carboxyphthiodiolenone-[(phenol)carboxyphthiodiolenone synthase] + 5 CO2 + 5 NADP(+) + 5 CoA + 2 H2O. The protein operates within lipid metabolism; fatty acid biosynthesis. Its function is as follows. Part of the PpsABCDE complex involved in the biosynthesis of the lipid core common to phthiocerols and phenolphthiocerols by successive additions of malonyl-CoA or methylmalonyl-CoA extender units. PpsA can accept as substrate the activated forms of either icosanoyl (C20), docosanoyl (C22) or lignoceroyl (C24) groups from FadD26, or a (4-hydroxyphenyl)-C17 or (4-hydroxyphenyl)-C19 fatty acyl from FadD29. PpsA initiates the biosynthesis and extends its substrate using a malonyl-CoA extender unit. The PpsB and PpsC proteins add the second and third malonyl-CoA extender units. PpsD adds an (R)-methylmalonyl unit and PpsE adds a second (R)-methylmalonyl unit. The incorporation of the methylmalonyl units results in formation of two branched methyl groups in the elongated product. This chain is Phenolphthiocerol/phthiocerol polyketide synthase subunit A (ppsA), found in Mycobacterium tuberculosis (strain ATCC 25618 / H37Rv).